Consider the following 503-residue polypeptide: Rhomboid-type serine protease 2 (503 aa).

Over residues 1-11 (MAAQSYYNGAY) the composition is skewed to polar residues. The segment at 1–66 (MAAQSYYNGA…SLRYSQQSIG (66 aa)) is disordered. Residues 1 to 136 (MAAQSYYNGA…QKKKGFFQKK (136 aa)) are Cytoplasmic-facing. A helical membrane pass occupies residues 137-157 (IAYVTYILTIAQIIVFIVELV). Residues 158–253 (KMGQLTGSPI…DKPAPDQWFR (96 aa)) lie on the Extracellular side of the membrane. Residues 254 to 274 (FIIPMFLHSGFVHIGFNLLVQ) traverse the membrane as a helical segment. Over 275–283 (MTMGADMER) the chain is Cytoplasmic. Residues 284–304 (MIGWWRYGLVYLSSGIWGFVL) traverse the membrane as a helical segment. At 305-316 (GGNYAGQGEASC) the chain is on the extracellular side. Residues 317-337 (GCSGALFGILALFVLDLLYGW) traverse the membrane as a helical segment. The active-site Nucleophile is S319. Residues 338 to 342 (NDRQN) are Cytoplasmic-facing. A helical transmembrane segment spans residues 343–363 (PWVELIIMVLGIAVSFVLGLL). Topologically, residues 364–365 (PG) are extracellular. A helical membrane pass occupies residues 366-386 (LDNFSHLGGFTMGLALGLCVM). The active site involves H371. The Cytoplasmic portion of the chain corresponds to 387–449 (RSPNALRERI…FAGRKPLWWA (63 aa)). Residues 450–470 (WWLVRLGALVAVLIGFILLIV) traverse the membrane as a helical segment. Topologically, residues 471 to 503 (NFYKYPSSNCSWCYRFSCLPVNGWCDQGNLFSR) are extracellular.

The protein belongs to the peptidase S54 family.

It is found in the membrane. The enzyme catalyses Cleaves type-1 transmembrane domains using a catalytic dyad composed of serine and histidine that are contributed by different transmembrane domains.. Functionally, probable rhomboid-type serine protease that catalyzes intramembrane proteolysis. The chain is Rhomboid-type serine protease 2 from Emericella nidulans (strain FGSC A4 / ATCC 38163 / CBS 112.46 / NRRL 194 / M139) (Aspergillus nidulans).